We begin with the raw amino-acid sequence, 353 residues long: Guanidino acid hydrolase, mitochondrial (353 aa).

The N-terminal 33 residues, 1–33 (MLQLLKSSWVRSAGSGVVTWRASAGLFCPGTRQ), are a transit peptide targeting the mitochondrion. Positions 29 to 52 (PGTRQASDTSDTLHHPSPSSESQV) are disordered. Mn(2+) contacts are provided by His-163 and His-188. Position 194 is an N6-acetyllysine (Lys-194). Lys-218 carries the N6-acetyllysine; alternate modification. At Lys-218 the chain carries N6-succinyllysine; alternate. A Mn(2+)-binding site is contributed by Asp-279.

The protein belongs to the arginase family. Agmatinase subfamily. Mn(2+) serves as cofactor.

The protein localises to the mitochondrion. It catalyses the reaction 3-guanidinopropanoate + H2O = urea + beta-alanine. It carries out the reaction 4-guanidinobutanoate + H2O = urea + 4-aminobutanoate. The catalysed reaction is taurocyamine + H2O = urea + taurine. The enzyme catalyses L-arginine + H2O = urea + L-ornithine. Its pathway is nitrogen metabolism; urea cycle; L-ornithine and urea from L-arginine: step 1/1. Functionally, hydrolyzes linear guanidino acids to form urea and the corresponding amines. Displays specificity for substrates having a negatively charged head group and short chains including taurocyamine, guanidino propanoic and butanoic acids. May protect cells by detoxifying potentially harmful amounts of guanidino acids. Metabolizes L-arginine with low efficiency. This chain is Guanidino acid hydrolase, mitochondrial (Agmat), found in Rattus norvegicus (Rat).